The primary structure comprises 269 residues: Undecaprenyl-diphosphatase (269 aa).

The next 7 helical transmembrane spans lie at 42–62 (WDTFIVLIQLGAVLGVVALYF), 83–103 (LTVLIGCIPAFAAGLALHGVI), 110–130 (PYLPQVICVSLILGGVILLVV), 142–162 (GMALSLKTAALIGLFQCLSLL), 186–206 (AEFSFFMAIPIMVGAFALDLL), 219–239 (AIAIGFVVSFLSGLVVVKFLI), and 247–267 (FTPFAWWRIVVGVIGLGLIYI).

Belongs to the UppP family.

It is found in the cell inner membrane. It catalyses the reaction di-trans,octa-cis-undecaprenyl diphosphate + H2O = di-trans,octa-cis-undecaprenyl phosphate + phosphate + H(+). Its function is as follows. Catalyzes the dephosphorylation of undecaprenyl diphosphate (UPP). Confers resistance to bacitracin. The chain is Undecaprenyl-diphosphatase from Caulobacter sp. (strain K31).